We begin with the raw amino-acid sequence, 72 residues long: Translation initiation factor IF-1 (72 aa).

The 72-residue stretch at 1 to 72 folds into the S1-like domain; that stretch reads MAKEDCIEME…TKGRIKFRSK (72 aa).

It belongs to the IF-1 family. Component of the 30S ribosomal translation pre-initiation complex which assembles on the 30S ribosome in the order IF-2 and IF-3, IF-1 and N-formylmethionyl-tRNA(fMet); mRNA recruitment can occur at any time during PIC assembly.

The protein resides in the cytoplasm. In terms of biological role, one of the essential components for the initiation of protein synthesis. Stabilizes the binding of IF-2 and IF-3 on the 30S subunit to which N-formylmethionyl-tRNA(fMet) subsequently binds. Helps modulate mRNA selection, yielding the 30S pre-initiation complex (PIC). Upon addition of the 50S ribosomal subunit IF-1, IF-2 and IF-3 are released leaving the mature 70S translation initiation complex. This chain is Translation initiation factor IF-1, found in Francisella tularensis subsp. novicida (strain U112).